The following is a 95-amino-acid chain: Aspartyl/glutamyl-tRNA(Asn/Gln) amidotransferase subunit C (95 aa).

Belongs to the GatC family. Heterotrimer of A, B and C subunits.

The catalysed reaction is L-glutamyl-tRNA(Gln) + L-glutamine + ATP + H2O = L-glutaminyl-tRNA(Gln) + L-glutamate + ADP + phosphate + H(+). It catalyses the reaction L-aspartyl-tRNA(Asn) + L-glutamine + ATP + H2O = L-asparaginyl-tRNA(Asn) + L-glutamate + ADP + phosphate + 2 H(+). Its function is as follows. Allows the formation of correctly charged Asn-tRNA(Asn) or Gln-tRNA(Gln) through the transamidation of misacylated Asp-tRNA(Asn) or Glu-tRNA(Gln) in organisms which lack either or both of asparaginyl-tRNA or glutaminyl-tRNA synthetases. The reaction takes place in the presence of glutamine and ATP through an activated phospho-Asp-tRNA(Asn) or phospho-Glu-tRNA(Gln). In Shouchella clausii (strain KSM-K16) (Alkalihalobacillus clausii), this protein is Aspartyl/glutamyl-tRNA(Asn/Gln) amidotransferase subunit C.